Here is a 224-residue protein sequence, read N- to C-terminus: 2-C-methyl-D-erythritol 4-phosphate cytidylyltransferase (224 aa).

The protein belongs to the IspD/TarI cytidylyltransferase family. IspD subfamily.

The enzyme catalyses 2-C-methyl-D-erythritol 4-phosphate + CTP + H(+) = 4-CDP-2-C-methyl-D-erythritol + diphosphate. It participates in isoprenoid biosynthesis; isopentenyl diphosphate biosynthesis via DXP pathway; isopentenyl diphosphate from 1-deoxy-D-xylulose 5-phosphate: step 2/6. Its function is as follows. Catalyzes the formation of 4-diphosphocytidyl-2-C-methyl-D-erythritol from CTP and 2-C-methyl-D-erythritol 4-phosphate (MEP). This chain is 2-C-methyl-D-erythritol 4-phosphate cytidylyltransferase, found in Bordetella petrii (strain ATCC BAA-461 / DSM 12804 / CCUG 43448).